We begin with the raw amino-acid sequence, 443 residues long: Methyl-coenzyme M reductase I subunit beta (443 aa).

Residue Tyr-367 coordinates coenzyme M. Gly-369 serves as a coordination point for coenzyme B.

This sequence belongs to the methyl-coenzyme M reductase beta subunit family. MCR is a hexamer of two alpha, two beta, and two gamma chains, forming a dimer of heterotrimers. The cofactor is coenzyme F430.

The protein resides in the cytoplasm. The catalysed reaction is coenzyme B + methyl-coenzyme M = methane + coenzyme M-coenzyme B heterodisulfide. The protein operates within one-carbon metabolism; methyl-coenzyme M reduction; methane from methyl-coenzyme M: step 1/1. Its activity is regulated as follows. Methyl-coenzyme M reductase activity is inhibited by 3-nitrooxypropanol (3-NOP) in vitro and in vivo, by oxidation of its active site Ni(I), which stops both growth and methanogenesis. Is also inhibited by the reaction product CoM-S-S-CoB. Its function is as follows. Component of the methyl-coenzyme M reductase (MCR) I that catalyzes the reductive cleavage of methyl-coenzyme M (CoM-S-CH3 or 2-(methylthio)ethanesulfonate) using coenzyme B (CoB or 7-mercaptoheptanoylthreonine phosphate) as reductant which results in the production of methane and the mixed heterodisulfide of CoB and CoM (CoM-S-S-CoB). This is the final step in methanogenesis. Neither N-6-mercaptohexanoylthreonine phosphate (H-S-HxoTP) nor N-8-mercaptooctanoylthreonine phosphate (H-SOcoTP) nor any other thiol compound such as CoA or CoM can substitute for CoB as the electron donor. The chain is Methyl-coenzyme M reductase I subunit beta (mcrB) from Methanothermobacter marburgensis (strain ATCC BAA-927 / DSM 2133 / JCM 14651 / NBRC 100331 / OCM 82 / Marburg) (Methanobacterium thermoautotrophicum).